Reading from the N-terminus, the 247-residue chain is tRNA pseudouridine synthase A 1 (247 aa).

The active-site Nucleophile is Asp53. Residue Tyr111 coordinates substrate.

Belongs to the tRNA pseudouridine synthase TruA family. As to quaternary structure, homodimer.

The catalysed reaction is uridine(38/39/40) in tRNA = pseudouridine(38/39/40) in tRNA. Its function is as follows. Formation of pseudouridine at positions 38, 39 and 40 in the anticodon stem and loop of transfer RNAs. The polypeptide is tRNA pseudouridine synthase A 1 (Bacillus cereus (strain ATCC 14579 / DSM 31 / CCUG 7414 / JCM 2152 / NBRC 15305 / NCIMB 9373 / NCTC 2599 / NRRL B-3711)).